The chain runs to 840 residues: Phosphatidylglycerol lysyltransferase (840 aa).

At 1-8 the chain is on the cytoplasmic side; the sequence is MNQEVKNK. The helical transmembrane segment at 9–29 threads the bilayer; that stretch reads IFSILKITFATALFIFVAITL. The Extracellular segment spans residues 30–52; that stretch reads YRELSGINFKDTLVEFSKINRMS. Residues 53–73 traverse the membrane as a helical segment; it reads LVLLFIGGGASLVILSMYDVI. The Cytoplasmic portion of the chain corresponds to 74-89; that stretch reads LSRALKMDISLGKVLR. Residues 90-110 traverse the membrane as a helical segment; the sequence is VSYIINALNAIVGFGGFIGAG. The Extracellular portion of the chain corresponds to 111 to 128; that stretch reads VRAMVYKNYTHDKKKLVH. The helical transmembrane segment at 129–149 threads the bilayer; sequence FISLILISMLTGLSLLSLLIV. Residues 150-161 lie on the Cytoplasmic side of the membrane; the sequence is FHVFDASLILDK. The chain crosses the membrane as a helical span at residues 162-182; that stretch reads ITWVRWVLYVVSFFLPLFIIY. Residues 183–200 lie on the Extracellular side of the membrane; it reads SMVRPPDKNNRFVGLYCT. Residues 201-221 traverse the membrane as a helical segment; the sequence is LVSCVEWLAAAVVLYFCGVIV. Over 222–229 the chain is Cytoplasmic; that stretch reads DAHVSFMS. A helical membrane pass occupies residues 230 to 250; the sequence is FIAIFIIAALSGLVSFIPGGF. The Extracellular portion of the chain corresponds to 251–271; that stretch reads GAFDLVVLLGFKTLGVPEEKV. Residues 272-292 traverse the membrane as a helical segment; that stretch reads LLMLLLYRFAYYFVPVIIALI. Residues 293 to 337 are Cytoplasmic-facing; that stretch reads LSSFEFGTSAKKYIEGSKYFIPAKDVTSFLMSYQKDIIAKIPSLS. The chain crosses the membrane as a helical span at residues 338–358; sequence LAILVFFTSMIFFVNNLTIVY. The Extracellular portion of the chain corresponds to 359 to 369; that stretch reads DALYDGNHLTY. The chain crosses the membrane as a helical span at residues 370–390; that stretch reads YILLAIHTSACLLLLLNVVGI. Residues 391–394 are Cytoplasmic-facing; that stretch reads YKQS. Helical transmembrane passes span 395 to 415 and 416 to 436; these read RRAI…TFFT and YASY…IVAF. The Cytoplasmic portion of the chain corresponds to 437–450; sequence RRARRLKRPVRMRN. The chain crosses the membrane as a helical span at residues 451–471; the sequence is IVAMLLFSLFILYVNHIFIAG. Over 472 to 489 the chain is Extracellular; it reads TLYALDIYTIEMHTSVLR. Residues 490–510 form a helical membrane-spanning segment; that stretch reads YYFWLTILIIAIIIGMIAWLF. Residues 511 to 840 lie on the Cytoplasmic side of the membrane; sequence DYQFSKVRIS…SKVMRVIRHK (330 aa).

This sequence belongs to the LPG synthase family.

Its subcellular location is the cell membrane. The catalysed reaction is L-lysyl-tRNA(Lys) + a 1,2-diacyl-sn-glycero-3-phospho-(1'-sn-glycerol) = a 1,2-diacyl-sn-glycero-3-phospho-1'-(3'-O-L-lysyl)-sn-glycerol + tRNA(Lys). Catalyzes the transfer of a lysyl group from L-lysyl-tRNA(Lys) to membrane-bound phosphatidylglycerol (PG), which produces lysylphosphatidylglycerol (LPG), a major component of the bacterial membrane with a positive net charge. LPG synthesis contributes to bacterial virulence as it is involved in the resistance mechanism against cationic antimicrobial peptides (CAMP) produces by the host's immune system (defensins, cathelicidins) and by the competing microorganisms (bacteriocins). In fact, the modification of anionic phosphatidylglycerol with positively charged L-lysine results in repulsion of the peptides. The sequence is that of Phosphatidylglycerol lysyltransferase (mprF) from Staphylococcus aureus (strain COL).